Reading from the N-terminus, the 469-residue chain is Melanopsin (469 aa).

Residues 1-71 (MDSPPGPTAP…VDVPDHAHYI (71 aa)) lie on the Extracellular side of the membrane. A glycan (N-linked (GlcNAc...) asparagine) is linked at Asn30. The helical transmembrane segment at 72–92 (LGTVILLVGLTGMLGNLTVIY) threads the bilayer. The Cytoplasmic portion of the chain corresponds to 93–106 (TFCRSRSLRTPANM). Residues 107–127 (LIINLAVSDFLMSFTQAPVFF) traverse the membrane as a helical segment. The Extracellular segment spans residues 128–143 (ASSLYKKWLFGETGCE). Residues Cys142 and Cys220 are joined by a disulfide bond. The helical transmembrane segment at 144 to 164 (FYAFCGAVLGITSMITLTAIA) threads the bilayer. Over 165 to 187 (LDRYLVITRPLATIGMGSKRRTA) the chain is Cytoplasmic. A helical transmembrane segment spans residues 188–208 (LVLLGIWLYALAWSLPPFFGW). Residues 209 to 237 (SAYVPEGLLTSCSWDYVTFTPQVRAYTML) are Extracellular-facing. A helical transmembrane segment spans residues 238–258 (LFCFVFFLPLLVIIFCYISIF). At 259-295 (RAIRETGRACEGWSESPQRRRQWHRLQSEWKMAKVAL) the chain is on the cytoplasmic side. A helical membrane pass occupies residues 296-316 (IVILLFVLSWAPYSTVALVAF). Residues 317-328 (AGYSHILTPYMS) lie on the Extracellular side of the membrane. Residues 329–349 (SVPAVIAKASAIHNPIVYAIT) traverse the membrane as a helical segment. Residue Lys336 is modified to N6-(retinylidene)lysine. The Cytoplasmic portion of the chain corresponds to 350-469 (HPKYRAAIAQ…SLDLGMQDAP (120 aa)). Residues 409-469 (GSESEVGWTD…SLDLGMQDAP (61 aa)) are disordered.

It belongs to the G-protein coupled receptor 1 family. Opsin subfamily.

Its subcellular location is the cell membrane. The protein localises to the cell projection. It is found in the axon. It localises to the dendrite. The protein resides in the perikaryon. In terms of biological role, photoreceptor that binds cis-retinaldehydes. Contributes to pupillar reflex, photoentrainment and other non-image forming responses to light. May be involved in the optokinetic visual tracking response. May be involved in the regulation of retinal hyaloid vessel growth and regression. This is Melanopsin (OPN4) from Phodopus sungorus (Striped hairy-footed hamster).